The sequence spans 463 residues: L-seryl-tRNA(Sec) selenium transferase (463 aa).

Lys295 is subject to N6-(pyridoxal phosphate)lysine.

Belongs to the SelA family. Homodecamer; pentamer of dimers. Binds only one seryl-tRNA(Sec) per dimer. It depends on pyridoxal 5'-phosphate as a cofactor.

The protein resides in the cytoplasm. The enzyme catalyses L-seryl-tRNA(Sec) + selenophosphate + H(+) = L-selenocysteinyl-tRNA(Sec) + phosphate. The protein operates within aminoacyl-tRNA biosynthesis; selenocysteinyl-tRNA(Sec) biosynthesis; selenocysteinyl-tRNA(Sec) from L-seryl-tRNA(Sec) (bacterial route): step 1/1. Functionally, converts seryl-tRNA(Sec) to selenocysteinyl-tRNA(Sec) required for selenoprotein biosynthesis. The chain is L-seryl-tRNA(Sec) selenium transferase from Salmonella arizonae (strain ATCC BAA-731 / CDC346-86 / RSK2980).